Consider the following 194-residue polypeptide: Peptidyl-tRNA hydrolase (194 aa).

TRNA is bound at residue tyrosine 17. Catalysis depends on histidine 22, which acts as the Proton acceptor. TRNA contacts are provided by phenylalanine 68, asparagine 70, and asparagine 116.

It belongs to the PTH family. As to quaternary structure, monomer.

The protein resides in the cytoplasm. The enzyme catalyses an N-acyl-L-alpha-aminoacyl-tRNA + H2O = an N-acyl-L-amino acid + a tRNA + H(+). In terms of biological role, hydrolyzes ribosome-free peptidyl-tRNAs (with 1 or more amino acids incorporated), which drop off the ribosome during protein synthesis, or as a result of ribosome stalling. Functionally, catalyzes the release of premature peptidyl moieties from peptidyl-tRNA molecules trapped in stalled 50S ribosomal subunits, and thus maintains levels of free tRNAs and 50S ribosomes. This is Peptidyl-tRNA hydrolase from Haemophilus influenzae (strain PittGG).